The following is a 450-amino-acid chain: Deoxyguanosinetriphosphate triphosphohydrolase-like protein (450 aa).

The 214-residue stretch at 61-274 (RLTHSLEVAQ…MELADDIAYA (214 aa)) folds into the HD domain.

The protein belongs to the dGTPase family. Type 2 subfamily.

The polypeptide is Deoxyguanosinetriphosphate triphosphohydrolase-like protein (Histophilus somni (strain 2336) (Haemophilus somnus)).